Reading from the N-terminus, the 243-residue chain is Probable flavin-dependent thymidylate synthase (243 aa).

The ThyX domain occupies 21–239; that stretch reads FEVDDFEESK…PNTYQDIPDV (219 aa). FAD-binding positions include serine 80 and 103-105; that span reads RHR. Residues 100-103, 113-115, and arginine 178 each bind dUMP; these read ELER and SQR. Positions 103-113 match the ThyX motif motif; that stretch reads RHRHLSFSVVS. 194–196 provides a ligand contact to FAD; the sequence is NHR. Arginine 205 provides a ligand contact to dUMP. Catalysis depends on arginine 205, which acts as the Involved in ionization of N3 of dUMP, leading to its activation.

This sequence belongs to the thymidylate synthase ThyX family. In terms of assembly, homotetramer. It depends on FAD as a cofactor.

It carries out the reaction dUMP + (6R)-5,10-methylene-5,6,7,8-tetrahydrofolate + NADPH + H(+) = dTMP + (6S)-5,6,7,8-tetrahydrofolate + NADP(+). The protein operates within pyrimidine metabolism; dTTP biosynthesis. Its function is as follows. Catalyzes the reductive methylation of 2'-deoxyuridine-5'-monophosphate (dUMP) to 2'-deoxythymidine-5'-monophosphate (dTMP) while utilizing 5,10-methylenetetrahydrofolate (mTHF) as the methyl donor, and NADPH and FADH(2) as the reductant. The sequence is that of Probable flavin-dependent thymidylate synthase (48) from Mycobacterium phage L5 (Mycobacteriophage L5).